Reading from the N-terminus, the 179-residue chain is MEMRGTTILAVKDDKGTAMIGDGQVTMGQAVVMKHSAVKVRTLYNDQVIAGFAGATADAFTLFERFEKKLKTYSGNLVRSAVEMATDWRTDKFLRKLEAMIMVADAEHILIISGNGDVIEPDDGVAAIGSGGSYALSAARALMRNTDMPAADIAQKSMEIASEICVYTNDHFVLKTLEK.

The active site involves Thr-6. Na(+) contacts are provided by Ser-162, Cys-165, and Thr-168.

This sequence belongs to the peptidase T1B family. HslV subfamily. A double ring-shaped homohexamer of HslV is capped on each side by a ring-shaped HslU homohexamer. The assembly of the HslU/HslV complex is dependent on binding of ATP.

It is found in the cytoplasm. It catalyses the reaction ATP-dependent cleavage of peptide bonds with broad specificity.. With respect to regulation, allosterically activated by HslU binding. Protease subunit of a proteasome-like degradation complex believed to be a general protein degrading machinery. The chain is ATP-dependent protease subunit HslV from Maridesulfovibrio salexigens (strain ATCC 14822 / DSM 2638 / NCIMB 8403 / VKM B-1763) (Desulfovibrio salexigens).